The sequence spans 751 residues: MIIRSPESEVKIVVERDPIKTSFEKWANPGHFSKTLSKTDPETTTWIWNLHADAHDFDSHTEDLEEISRKVFSAHFGQLAIIFTWLSGMYFHGARFSNYEAWLADPTHIKPSAQVVWPIVGQEILNGDVGGGFRGIQITSGFFPIWRASGITSELQLYCTAIGALIFAALMLFAGWFHYHKAAPKLAWFQQVESMLNHHLAGLLGLGSLSWAGHQIHVSLPINQLLDAGVDPKEIPLPHEFILNRDLLNQLYPSFAQGLLPFFTLNWSEYSEILTFRGGLNPVTGGLWLTDTAHHHLAIAVLFLIAGHMYKTNWGIGHSLKEILEAHKGPFTGEGHKGLYEILTNSWHAQLALNLAMLGSLTIIVAHHMYSMPPYPYLAIDYSTQLSLFTHHMWIGGFIIVGAAAHAAIFLVRDYDSTTSYNNLLDRVLRHRDAIISHLNWVCIFLGFHSFGLYIHNDTMSALGRPQDMFSDTAIQLQPIFAQWLQNTHVTAPSFTAPAATASTSLTWGGGDIITVGNKVALLPIPLGTADFLVHHIHAFTIHVTVLILLKGVLFARSSRLIPDKANLGFRFPCDGPGRGGTCQVSAWDHVFLGLFWMYNAISVVIFHFSWKMQSDVWGNISKQGVVTHITGGNFAQSSITINGWLRDFLWAQASQVIQSYGSALSAYGLFFLGAHFVWAFSLMFLFSGRGYWQELIESIVWAHNKLKVAPAIQPRALSIVQGRAVGVAHYLLGGIVTTWAFFLARIIAVE.

8 helical membrane-spanning segments follow: residues 71-94 (VFSA…FHGA), 157-180 (LYCT…FHYH), 196-220 (LNHH…HVSL), 292-310 (TAHH…GHMY), 347-370 (WHAQ…HHMY), 386-412 (LSLF…IFLV), 434-456 (AIIS…LYIH), and 532-550 (FLVH…LILL). Positions 574 and 583 each coordinate [4Fe-4S] cluster. 2 helical membrane passes run 590–611 (HVFL…HFSW) and 665–687 (LSAY…MFLF). Position 676 (His-676) interacts with chlorophyll a'. 2 residues coordinate chlorophyll a: Met-684 and Tyr-692. Trp-693 contributes to the phylloquinone binding site. A helical membrane pass occupies residues 725–745 (AVGVAHYLLGGIVTTWAFFLA).

The protein belongs to the PsaA/PsaB family. As to quaternary structure, the PsaA/B heterodimer binds the P700 chlorophyll special pair and subsequent electron acceptors. PSI consists of a core antenna complex that captures photons, and an electron transfer chain that converts photonic excitation into a charge separation. The eukaryotic PSI reaction center is composed of at least 11 subunits. P700 is a chlorophyll a/chlorophyll a' dimer, A0 is one or more chlorophyll a, A1 is one or both phylloquinones and FX is a shared 4Fe-4S iron-sulfur center. serves as cofactor.

Its subcellular location is the plastid. The protein resides in the chloroplast thylakoid membrane. It catalyses the reaction reduced [plastocyanin] + hnu + oxidized [2Fe-2S]-[ferredoxin] = oxidized [plastocyanin] + reduced [2Fe-2S]-[ferredoxin]. Its function is as follows. PsaA and PsaB bind P700, the primary electron donor of photosystem I (PSI), as well as the electron acceptors A0, A1 and FX. PSI is a plastocyanin-ferredoxin oxidoreductase, converting photonic excitation into a charge separation, which transfers an electron from the donor P700 chlorophyll pair to the spectroscopically characterized acceptors A0, A1, FX, FA and FB in turn. Oxidized P700 is reduced on the lumenal side of the thylakoid membrane by plastocyanin. This Welwitschia mirabilis (Tree tumbo) protein is Photosystem I P700 chlorophyll a apoprotein A1.